The following is a 467-amino-acid chain: Transcription factor CRF1 (467 aa).

The span at 1 to 10 (MLLSAPVNST) shows a compositional bias: polar residues. 4 disordered regions span residues 1–42 (MLLS…VVLS), 62–110 (DFES…SSKT), 151–170 (SKSESHRQYHSPSASTTNED), and 341–361 (TYRDDESTDEDESLPTPDRKR). Residues 11 to 23 (VRRKPHSPNKKKP) are compositionally biased toward basic residues. Residues 28-42 (TAASFSSSSSTVVLS) are compositionally biased toward low complexity. The span at 89–102 (YSREENTNEVEEKT) shows a compositional bias: basic and acidic residues.

As to quaternary structure, interacts with FHL1 to form a repressor complex. The formation of the CRF1-FHL1 complex is inhibited by the TOR pathway. In terms of processing, phosphorylated by CDC28 and YAK1.

The protein localises to the cytoplasm. It localises to the nucleus. Functionally, transcription factor, corepressor with FHL1 of ribosomal protein genes. May be involved in the blocking of the spread of silencing. In Saccharomyces cerevisiae (strain ATCC 204508 / S288c) (Baker's yeast), this protein is Transcription factor CRF1 (CRF1).